Here is a 425-residue protein sequence, read N- to C-terminus: Putative nucleoside transporter YegT (425 aa).

At 1–8 (MKTTAKLS) the chain is on the periplasmic side. Residues 9–29 (FMMFVEWFIWGAWFVPLWLWL) traverse the membrane as a helical segment. The Cytoplasmic portion of the chain corresponds to 30 to 38 (SKSGFSAGE). Residues 39-59 (IGWSYACTAIAAILSPILVGS) traverse the membrane as a helical segment. At 60 to 63 (ITDR) the chain is on the periplasmic side. A helical membrane pass occupies residues 64-84 (FFSAQKVLAVLMFAGALLMYF). At 85–90 (AAQQTT) the chain is on the cytoplasmic side. Residues 91 to 111 (FAGFFPLLLAYSLTYMPTIAL) form a helical membrane-spanning segment. Residues 112 to 131 (TNSIAFANVPDVERDFPRIR) lie on the Periplasmic side of the membrane. A helical transmembrane segment spans residues 132-152 (VMGTIGWIASGLACGFLPQIL). Residues 153–161 (GYADISPTN) lie on the Cytoplasmic side of the membrane. A helical transmembrane segment spans residues 162–182 (IPLLITAGSSALLGVFAFFLP). The Periplasmic portion of the chain corresponds to 183–210 (DTPPKSTGKMDIKVMLGLDALILLRDKN). A helical membrane pass occupies residues 211–231 (FLVFFFCSFLFAMPLAFYYIF). The Cytoplasmic portion of the chain corresponds to 232 to 244 (ANGYLTEVGMKNA). A helical membrane pass occupies residues 245 to 265 (TGWMTLGQFSEIFFMLALPFF). The Periplasmic segment spans residues 266-287 (TKRFGIKKVLLLGLVTAAIRYG). A helical transmembrane segment spans residues 288 to 308 (FFIYGSADEYFTYALLFLGIL). The Cytoplasmic portion of the chain corresponds to 309–339 (LHGVSYDFYYVTAYIYVDKKAPVHMRTAAQG). The chain crosses the membrane as a helical span at residues 340 to 360 (LITLCCQGFGSLLGYRLGGVM). Over 361-379 (MEKMFAYQEPVNGLTFNWS) the chain is Periplasmic. The chain crosses the membrane as a helical span at residues 380–400 (GMWTFGAVMIAIIAVLFMIFF). At 401–425 (RESDNEITAIKVDDRDIALTQGEVK) the chain is on the cytoplasmic side.

This sequence belongs to the major facilitator superfamily. Nucleoside:H(+) symporter (NHS) (TC 2.A.1.10) family.

The protein resides in the cell inner membrane. Its function is as follows. Could be involved in nucleoside transport. This chain is Putative nucleoside transporter YegT (yegT), found in Escherichia coli (strain K12).